Reading from the N-terminus, the 423-residue chain is MLVAVGLNQKGATVADREVLALPAEGFQSTLAEYAALDAVDEIAVMSTCYRVEIYAATRCPAAATLSLRQALNARAGRELPLFELHGEEAYRHLVRVASSLESAILGEPQILGQVKEAFQRSIDQGVAAKELTSVLNRALSAAKRVRTDTAIGRAGISWGHAAATLAEKVLGKMQGRRVVVVGAGEMARLSAQHLRDQGARIVVLNRTLVNGEALAREVGGVARPLEALGEELAQADVVVSAAPVAPDAFQPEAMAELSRSRKRPIVLVDLAVPRAIPAATGAIRDVYLCDVDDLDRVMKAAMSERAAAVADADRIIAEEVGKFVRAEAERRAAPLIQEMRTRASAIAREEVERTLRRLGEDPEVERRLEAMAGSIVSKILHAPSARLRQAVCDGCSGEALVSAAVEIFELSADIRVHRGNAA.

Substrate contacts are provided by residues 48–51 (TCYR), Ser-103, 108–110 (EPQ), and Gln-114. The active-site Nucleophile is Cys-49. 183–188 (GAGEMA) contributes to the NADP(+) binding site.

Belongs to the glutamyl-tRNA reductase family. Homodimer.

It carries out the reaction (S)-4-amino-5-oxopentanoate + tRNA(Glu) + NADP(+) = L-glutamyl-tRNA(Glu) + NADPH + H(+). It participates in porphyrin-containing compound metabolism; protoporphyrin-IX biosynthesis; 5-aminolevulinate from L-glutamyl-tRNA(Glu): step 1/2. Its function is as follows. Catalyzes the NADPH-dependent reduction of glutamyl-tRNA(Glu) to glutamate 1-semialdehyde (GSA). This is Glutamyl-tRNA reductase 2 from Anaeromyxobacter sp. (strain Fw109-5).